Reading from the N-terminus, the 86-residue chain is uncharacterized protein (86 aa).

Residues 1-21 (MLSNSTSRNRHSKHNKKNTRE) form a disordered region. The span at 8 to 17 (RNRHSKHNKK) shows a compositional bias: basic residues.

This is an uncharacterized protein from Acidianus convivator (ATV).